Here is a 406-residue protein sequence, read N- to C-terminus: Plasma serine protease inhibitor (406 aa).

An N-terminal signal peptide occupies residues 1-19 (MQLFLLLCLVLLSPQGASL). Residues 20–25 (HRHHPR) constitute a propeptide, removed in mature form. An O-linked (GalNAc...) threonine glycan is attached at threonine 39. Residues asparagine 249, asparagine 262, and asparagine 338 are each glycosylated (N-linked (GlcNAc...) asparagine).

Belongs to the serpin family. Forms protease inhibiting heterodimers in extracellular body fluids with serine proteases such as activated protein C/coagulation factor V/F5, acrosin/ACR, chymotrypsinogen B/CTRB1, prothrombin/F2, factor Xa/F10, factor XI/F11, kallikrein/KLKB1, tissue kallikrein, trypsin/PRSS1, prostate specific antigen/KLK3, tissue plasminogen activator/PLAT and urinary plasminogen activator/PLAU. Forms membrane-anchored serine proteases inhibiting heterodimers with TMPRSS7 and TMPRSS11E. Interacts with SEMG2. Post-translationally, N- and O-glycosylated. N-glycosylation consists of a mixture of sialylated bi- (including sialyl-Lewis X epitopes), tri- and tetra-antennary complex-type chains; affects the maximal heparin- and thrombomodulin-enhanced rates of thrombin inhibition. O-glycosylated with core 1 or possibly core 8 glycans. Further modified with 2 sialic acid residues. In terms of processing, proteolytically cleaved. Inhibition of proteases is accompanied by formation of a stable enzyme-inhibitor complex and by degradation of the serpin to lower molecular weight derivatives. Proteolytically cleaved at the N-terminus; inhibits slightly the heparin- and thrombomodulin-enhanced rates of thrombin inhibition. As to expression, predominantly expressed in the epithelium of seminal vesicles. Expressed in the proximal tubular epithelium of the kidney. Expressed in the superficial and more differentiated epidermal keratinocytes of the skin. Expressed in megakaryocytes and platelets. Expressed poorly in kidney tumor cells compared to non tumor kidney tissues. Expressed in spermatozoa. Present in very high concentration in seminal plasma. Present in high concentration in plasma, synovial and Graaf follicle fluids. Present in low concentration in breast milk and in amniotic fluids. Present in very low concentration in urine, cerebrospinal fluids, saliva and tears (at protein level). Strongly expressed in liver. Expressed in kidney, spleen, pancreas, skeletal muscle, heart, testes, ovary, interstitial Leydig cells, epididymal glands, seminal vesicles and prostate.

Its subcellular location is the secreted. The protein resides in the extracellular space. Its inhibitory activity is greatly enhanced in the presence of glycosaminoglycans, heparin, thrombomodulin and phospholipids vesicles. In terms of biological role, heparin-dependent serine protease inhibitor acting in body fluids and secretions. Inactivates serine proteases by binding irreversibly to their serine activation site. Involved in the regulation of intravascular and extravascular proteolytic activities. Plays hemostatic roles in the blood plasma. Acts as a procoagulant and pro-inflammatory factor by inhibiting the anticoagulant activated protein C factor as well as the generation of activated protein C factor by the thrombin/thrombomodulin complex. Acts as an anticoagulant factor by inhibiting blood coagulation factors like prothrombin, factor XI, factor Xa, plasma kallikrein and fibrinolytic enzymes such as tissue- and urinary-type plasminogen activators. In seminal plasma, inactivates several serine proteases implicated in the reproductive system. Inhibits the serpin acrosin; indirectly protects component of the male genital tract from being degraded by excessive released acrosin. Inhibits tissue- and urinary-type plasminogen activator, prostate-specific antigen and kallikrein activities; has a control on the sperm motility and fertilization. Inhibits the activated protein C-catalyzed degradation of SEMG1 and SEMG2; regulates the degradation of semenogelin during the process of transfer of spermatozoa from the male reproductive tract into the female tract. In urine, inhibits urinary-type plasminogen activator and kallikrein activities. Inactivates membrane-anchored serine proteases activities such as MPRSS7 and TMPRSS11E. Inhibits urinary-type plasminogen activator-dependent tumor cell invasion and metastasis. May also play a non-inhibitory role in seminal plasma and urine as a hydrophobic hormone carrier by its binding to retinoic acid. In Homo sapiens (Human), this protein is Plasma serine protease inhibitor (SERPINA5).